The following is a 166-amino-acid chain: Peptide deformylase (166 aa).

Residues Cys-88 and His-130 each contribute to the Fe cation site. Residue Glu-131 is part of the active site. His-134 serves as a coordination point for Fe cation.

This sequence belongs to the polypeptide deformylase family. Fe(2+) serves as cofactor.

The enzyme catalyses N-terminal N-formyl-L-methionyl-[peptide] + H2O = N-terminal L-methionyl-[peptide] + formate. In terms of biological role, removes the formyl group from the N-terminal Met of newly synthesized proteins. Requires at least a dipeptide for an efficient rate of reaction. N-terminal L-methionine is a prerequisite for activity but the enzyme has broad specificity at other positions. This is Peptide deformylase from Caldicellulosiruptor bescii (strain ATCC BAA-1888 / DSM 6725 / KCTC 15123 / Z-1320) (Anaerocellum thermophilum).